The sequence spans 629 residues: MQFHERFDVIVVGGGHAGTEAALAAARMGCKTLLLTHNVDTLGQMSCNPAIGGIGKGHLVKEIDALGGAMAIATDFSGIQFRTLNSSKGPAVRATRAQADRALYKAKILNILQHQPNLRIFQQAVDDLVVENGRVIGAVTQMGLAFEAPAVVLTAGTFLGGKIHIGLENYSGGRAGDQPAIALAHRLRDLPLRVGRLKTGTPPRIDARTIDFSVMTEQKGDTPLPVMSFIGDLSQHPEQISCYITHTNEQTHDIIRGGLDRSPMYSGVIEGIGPRYCPSIEDKIHRFADKNSHQIFIEPEGLTTTEIYPNGISTSLPFDVQIQLVRSIRGMEQAEIVRPGYAIEYDYFDPRDLKNSLETKVIDGLFFAGQINGTTGYEEAGAQGLLAGLNAALQVQGKEAWAPRRDQAYLGVLVDDLSTLGTKEPYRMFTSRAEYRLLLREDNADLRLTEKGRELGLVDDFRWQKFSEKRESIELEQQRLRGQWVHVNSPQVAELNEVLSAPLTREASLEDLLRRPEIEYDTLMKVDGFGPGLADPLAAEQVQIQVKYAGYIQRQQDEIAKAERNENTRLPLDLDYSEVPGLSNEVTAKLNAHKPETIGQASRISGVTPAAVSILLVHLKKRGLLRKSA.

G13–G18 provides a ligand contact to FAD. NAD(+) is bound at residue G273–F287.

The protein belongs to the MnmG family. As to quaternary structure, homodimer. Heterotetramer of two MnmE and two MnmG subunits. It depends on FAD as a cofactor.

It localises to the cytoplasm. In terms of biological role, NAD-binding protein involved in the addition of a carboxymethylaminomethyl (cmnm) group at the wobble position (U34) of certain tRNAs, forming tRNA-cmnm(5)s(2)U34. The sequence is that of tRNA uridine 5-carboxymethylaminomethyl modification enzyme MnmG from Shewanella amazonensis (strain ATCC BAA-1098 / SB2B).